The primary structure comprises 445 residues: Proton extrusion protein PxcA (445 aa).

The next 4 membrane-spanning stretches (helical) occupy residues 227–247, 322–342, 369–389, and 405–425; these read FILLLIIVPLLTQQLTKTFLI, AIANIFADICSLIAFGFVVAF, LIILFTDIFVGFHSPHGWEVI, and FNFLFIATFPVILDTVLKYWI.

This sequence belongs to the CemA family.

It is found in the cell inner membrane. In terms of biological role, required for H(+) efflux immediately after light irradiation to form a rapid H(+) concentration gradient across the thylakoid membranes. Together with PxcL, contributes to transient H(+) uptake following dark to light transition. This Microcystis aeruginosa (strain NIES-843 / IAM M-2473) protein is Proton extrusion protein PxcA.